The following is a 474-amino-acid chain: tRNA modification GTPase MnmE (474 aa).

Positions 25, 82, and 123 each coordinate (6S)-5-formyl-5,6,7,8-tetrahydrofolate. Positions 219-386 (GIKVVIAGKP…LKKHLYDSAM (168 aa)) constitute a TrmE-type G domain. N229 lines the K(+) pocket. GTP contacts are provided by residues 229–234 (NAGKSS), 248–254 (SNISGTT), and 273–276 (DTAG). S233 contacts Mg(2+). Residues S248, I250, and T253 each coordinate K(+). T254 is a Mg(2+) binding site. K474 is a binding site for (6S)-5-formyl-5,6,7,8-tetrahydrofolate.

The protein belongs to the TRAFAC class TrmE-Era-EngA-EngB-Septin-like GTPase superfamily. TrmE GTPase family. In terms of assembly, homodimer. Heterotetramer of two MnmE and two MnmG subunits. K(+) is required as a cofactor.

Its subcellular location is the cytoplasm. Its function is as follows. Exhibits a very high intrinsic GTPase hydrolysis rate. Involved in the addition of a carboxymethylaminomethyl (cmnm) group at the wobble position (U34) of certain tRNAs, forming tRNA-cmnm(5)s(2)U34. The protein is tRNA modification GTPase MnmE of Blochmanniella floridana.